A 74-amino-acid polypeptide reads, in one-letter code: UPF0435 protein BCB4264_A0471 (74 aa).

It belongs to the UPF0435 family.

The chain is UPF0435 protein BCB4264_A0471 from Bacillus cereus (strain B4264).